Reading from the N-terminus, the 357-residue chain is Holliday junction branch migration complex subunit RuvB (357 aa).

Residues 4-195 (TDKLAAKAVS…FGIVARLEFY (192 aa)) are large ATPase domain (RuvB-L). Residues Leu-34, Arg-35, Gly-76, Lys-79, Thr-80, Thr-81, 142 to 144 (EDY), Arg-185, Tyr-195, and Arg-232 contribute to the ATP site. Thr-80 contributes to the Mg(2+) binding site. The segment at 196 to 266 (TPAELAKIVT…VADAALAMLD (71 aa)) is small ATPAse domain (RuvB-S). The interval 269–357 (AVGFDLMDRK…PVRDLWDDNQ (89 aa)) is head domain (RuvB-H). DNA contacts are provided by Arg-305, Arg-324, and Arg-329.

Belongs to the RuvB family. As to quaternary structure, homohexamer. Forms an RuvA(8)-RuvB(12)-Holliday junction (HJ) complex. HJ DNA is sandwiched between 2 RuvA tetramers; dsDNA enters through RuvA and exits via RuvB. An RuvB hexamer assembles on each DNA strand where it exits the tetramer. Each RuvB hexamer is contacted by two RuvA subunits (via domain III) on 2 adjacent RuvB subunits; this complex drives branch migration. In the full resolvosome a probable DNA-RuvA(4)-RuvB(12)-RuvC(2) complex forms which resolves the HJ.

It localises to the cytoplasm. It carries out the reaction ATP + H2O = ADP + phosphate + H(+). Its function is as follows. The RuvA-RuvB-RuvC complex processes Holliday junction (HJ) DNA during genetic recombination and DNA repair, while the RuvA-RuvB complex plays an important role in the rescue of blocked DNA replication forks via replication fork reversal (RFR). RuvA specifically binds to HJ cruciform DNA, conferring on it an open structure. The RuvB hexamer acts as an ATP-dependent pump, pulling dsDNA into and through the RuvAB complex. RuvB forms 2 homohexamers on either side of HJ DNA bound by 1 or 2 RuvA tetramers; 4 subunits per hexamer contact DNA at a time. Coordinated motions by a converter formed by DNA-disengaged RuvB subunits stimulates ATP hydrolysis and nucleotide exchange. Immobilization of the converter enables RuvB to convert the ATP-contained energy into a lever motion, pulling 2 nucleotides of DNA out of the RuvA tetramer per ATP hydrolyzed, thus driving DNA branch migration. The RuvB motors rotate together with the DNA substrate, which together with the progressing nucleotide cycle form the mechanistic basis for DNA recombination by continuous HJ branch migration. Branch migration allows RuvC to scan DNA until it finds its consensus sequence, where it cleaves and resolves cruciform DNA. This is Holliday junction branch migration complex subunit RuvB from Ralstonia pickettii (strain 12J).